The following is a 328-amino-acid chain: Probable GDP-L-fucose synthase 1 (328 aa).

Residue 25 to 31 participates in NADP(+) binding; sequence GHRGLVG. Residue Tyr-152 is the Proton donor/acceptor of the active site. NADP(+)-binding positions include Lys-156, 179-182, and His-195; that span reads PTNL. Substrate-binding residues include Arg-203, Trp-218, Arg-225, and Asp-285.

The protein belongs to the NAD(P)-dependent epimerase/dehydratase family. Fucose synthase subfamily. As to quaternary structure, homodimer.

The enzyme catalyses GDP-beta-L-fucose + NADP(+) = GDP-4-dehydro-alpha-D-rhamnose + NADPH + H(+). The protein operates within nucleotide-sugar biosynthesis; GDP-L-fucose biosynthesis via de novo pathway; GDP-L-fucose from GDP-alpha-D-mannose: step 2/2. Its function is as follows. Catalyzes the two-step NADP-dependent conversion of GDP-4-dehydro-6-deoxy-D-mannose to GDP-fucose, involving an epimerase and a reductase reaction. This chain is Probable GDP-L-fucose synthase 1, found in Oryza sativa subsp. japonica (Rice).